Reading from the N-terminus, the 1181-residue chain is Protein P1-P2 (1181 aa).

The first 33 residues, Met-1–Ser-33, serve as a signal peptide directing secretion. The next 4 membrane-spanning stretches (helical) occupy residues Leu-172–Ala-192, Ala-194–Pro-214, Ala-218–Leu-235, and Ile-240–Leu-260. Positions Ile-318–Glu-515 constitute a Peptidase S39 domain. Active-site for protease activity residues include His-366, Asp-396, and Ser-465. The disordered stretch occupies residues Gly-572–Thr-688. Basic and acidic residues-rich tracts occupy residues Gly-598–Pro-608 and Glu-638–Gly-648. A compositionally biased stretch (polar residues) spans Gln-649–Arg-677. In terms of domain architecture, RdRp catalytic spans Arg-979 to Ala-1094.

It belongs to the luteoviruses RNA polymerase family. In terms of processing, specific enzymatic cleavages in vivo yield mature proteins. The protease probably cleaves itself and releases the RdRp (Potential). Cleavages have been shown in the P1 protein, but since the N-terminus containing the serine protease is shared between P1 and P1-P2, cleavages should also occur within the P1-P2 protein.

It localises to the membrane. The catalysed reaction is RNA(n) + a ribonucleoside 5'-triphosphate = RNA(n+1) + diphosphate. Its function is as follows. RNA-dependent RNA polymerase that plays an essential role in virus replication. This chain is Protein P1-P2, found in Cicer arietinum (Chickpea).